A 356-amino-acid chain; its full sequence is Dihydroorotate dehydrogenase (quinone) (356 aa).

FMN contacts are provided by residues 66 to 70 (AGFDK) and Thr90. Residue Lys70 participates in substrate binding. Substrate is bound at residue 115–119 (NRMGF). Residues Asn143 and Asn176 each contribute to the FMN site. Asn176 contributes to the substrate binding site. Ser179 (nucleophile) is an active-site residue. Asn181 provides a ligand contact to substrate. Lys212 and Thr240 together coordinate FMN. A substrate-binding site is contributed by 241 to 242 (NT). Residues Gly266, Gly295, and 316–317 (YT) contribute to the FMN site.

It belongs to the dihydroorotate dehydrogenase family. Type 2 subfamily. In terms of assembly, monomer. FMN serves as cofactor.

The protein resides in the cell membrane. The catalysed reaction is (S)-dihydroorotate + a quinone = orotate + a quinol. The protein operates within pyrimidine metabolism; UMP biosynthesis via de novo pathway; orotate from (S)-dihydroorotate (quinone route): step 1/1. Functionally, catalyzes the conversion of dihydroorotate to orotate with quinone as electron acceptor. The polypeptide is Dihydroorotate dehydrogenase (quinone) (Rhodococcus erythropolis (strain PR4 / NBRC 100887)).